We begin with the raw amino-acid sequence, 2114 residues long: Protein CELLULOSE SYNTHASE INTERACTIVE 2 (2114 aa).

ARM repeat units lie at residues 2 to 42, 46 to 87, 89 to 128, 135 to 177, 180 to 219, 222 to 262, 265 to 305, 354 to 394, 396 to 435, 479 to 519, 522 to 561, 563 to 595, 601 to 640, 643 to 682, 708 to 750, 774 to 816, 825 to 865, 870 to 910, 914 to 953, 994 to 1033, 1044 to 1083, 1087 to 1128, 1141 to 1182, 1185 to 1225, 1227 to 1264, 1265 to 1304, 1312 to 1353, 1355 to 1394, 1396 to 1435, 1454 to 1494, 1496 to 1525, 1526 to 1564, 1566 to 1605, 1606 to 1648, 1650 to 1689, 1690 to 1730, 1732 to 1771, 1772 to 1813, 1816 to 1855, 1857 to 1898, 1901 to 1940, and 1949 to 1993; these read TSEM…LLGL, KKEC…VLCK, KNVRSKILIGGCIPPLLSLLKSDSVDAKRVVAEAIYEVSL, NVGT…NLCG, DGFWALTLEDGGVDIILKLLQSSNPVSQSNAASLLARLIR, TSSI…AITS, EEAI…SYGT, GDTR…SLFG, VDLSKLLNNVDAKRVLVCLTILATDGPRERMITCLSNLCK, EESR…NLCC, EEIRLCVEKAGAIPALLGLLKNGGPKSQESSANTLLKLIK, ADPSVIEQVQALFLGDAPKSKTHLIRVLGHVLA, EFVTKGSAANNGLRSLVQRLASSNEKMKENAASVLADLFS, KDLCGGLGFDEDDNPCTKLLSGNTHAVATQLAHALGSLSN, AKTN…RVLR, SDVF…LLAK, HNPF…RFCK, LLGR…CAAK, TLWAEAVEQSGYLKTLVNTLLDMSKQNSKSASYGIEIQRP, PSNRLVVMEGNGLEIIAENLQRNKSNTQENSSDSEEKWIA, PKVVSSPATENILQTLAPFMQSEQMIDGYFTAQVLAALVR, DKTI…LVQN, ERVR…RIAD, DLSK…SLFR, PEITRHKTAISSMKQLIGILHLASRSTRYNAARVLCEL, FSSEHIRDSELAWKALSPLIEMLNTTLESERVAALTALVK, RPDI…FLFT, EGLRTSTSAACCIVSLISLIRTGKSTAIEAGMFALDRLLD, KRFVEVAEEHDCVNLFYGYVASENYLISEAAISCLTKMAK, ISQL…MVQP, LLILLRQDLDFQGQLGGLQAIANILEKPMV, LESLKIASSTIIMPLIPLLESESIAVKNATTILLTSLLE, QRFQEEITTKNLIAPLVKLVGIRVRNLQEIALMGLERSSV, TWPK…NILR, NPEHYYFTVTIPVLSKMLFSTAESTVILAIDALIIRENQD, SSSV…RNPK, RETKICQFVLTPLSEYILDPDTISESAKILIAMALGDISQ, HEGL…NFAM, RTSRKAMAEAGGVYWVQEMLRSSNPQVSTQAALIIKSLFS, HTLQ…TILT, PKLRSSEAATACIPHLIGALKSGEQEARDSAMDTIYTLRQ, and TARS…CLPG. A C2 domain is found at 1974-2087; it reads SPAPSSFHER…LSEGSYSGIF (114 aa).

In terms of assembly, associates with cellulase synthase (CESA) complexes. Binds to cortical microtubules.

It is found in the cell membrane. Its subcellular location is the cytoplasm. The protein resides in the cytoskeleton. Functionally, regulator of the microtubular cytoskeleton. Microtubule-associated protein involved in the association of cellulase synthase (CESA) complexes (CSCs) and cortical microtubules. Promotes dynamics of CSCs in the plasma membrane. Regulates primary cell wall biosynthesis and cellulose microfibrils organization. The sequence is that of Protein CELLULOSE SYNTHASE INTERACTIVE 2 from Arabidopsis thaliana (Mouse-ear cress).